The chain runs to 463 residues: Chromosomal replication initiator protein DnaA (463 aa).

The domain I, interacts with DnaA modulators stretch occupies residues 1–83 (MNTNQIILTD…LQLFQHYNNT (83 aa)). Positions 83-124 (TIKSIDIITKELPGTTQTVIELPTKTFADIGSSELNSENIFS) are domain II. The domain III, AAA+ region stretch occupies residues 125–343 (TLDVRFTFDN…GALNKVIAHS (219 aa)). 4 residues coordinate ATP: Gly171, Gly173, Lys174, and Thr175. Positions 344–463 (NFTLKEITLE…INLLMKILQH (120 aa)) are domain IV, binds dsDNA.

This sequence belongs to the DnaA family. As to quaternary structure, oligomerizes as a right-handed, spiral filament on DNA at oriC.

It localises to the cytoplasm. Plays an essential role in the initiation and regulation of chromosomal replication. ATP-DnaA binds to the origin of replication (oriC) to initiate formation of the DNA replication initiation complex once per cell cycle. Binds the DnaA box (a 9 base pair repeat at the origin) and separates the double-stranded (ds)DNA. Forms a right-handed helical filament on oriC DNA; dsDNA binds to the exterior of the filament while single-stranded (ss)DNA is stabiized in the filament's interior. The ATP-DnaA-oriC complex binds and stabilizes one strand of the AT-rich DNA unwinding element (DUE), permitting loading of DNA polymerase. After initiation quickly degrades to an ADP-DnaA complex that is not apt for DNA replication. Binds acidic phospholipids. The protein is Chromosomal replication initiator protein DnaA of Rickettsia akari (strain Hartford).